The primary structure comprises 81 residues: Ferredoxin (81 aa).

In terms of domain architecture, 4Fe-4S ferredoxin-type spans Lys-2–Asp-30. Residues Cys-11, Cys-14, Cys-17, and Cys-61 each contribute to the [4Fe-4S] cluster site.

It depends on [4Fe-4S] cluster as a cofactor.

In terms of biological role, ferredoxins are iron-sulfur proteins that transfer electrons in a wide variety of metabolic reactions. The protein is Ferredoxin (fer) of Geobacillus stearothermophilus (Bacillus stearothermophilus).